The primary structure comprises 253 residues: NAD-dependent protein deacetylase (253 aa).

Residues 3–253 (APSLSSGVEQ…GETLGPFVGN (251 aa)) enclose the Deacetylase sirtuin-type domain. NAD(+)-binding residues include A29, T33, F40, R41, Q106, I108, D109, and H126. F40 contacts nicotinamide. Nicotinamide contacts are provided by I108 and D109. H126 acts as the Proton acceptor in catalysis. Positions 134, 137, 159, and 162 each coordinate Zn(2+). NAD(+) is bound by residues S200, S201, N225, D242, and I243.

It belongs to the sirtuin family. Class U subfamily. Zn(2+) is required as a cofactor.

Its subcellular location is the cytoplasm. The enzyme catalyses N(6)-acetyl-L-lysyl-[protein] + NAD(+) + H2O = 2''-O-acetyl-ADP-D-ribose + nicotinamide + L-lysyl-[protein]. Its function is as follows. NAD-dependent protein deacetylase which modulates the activities of several enzymes which are inactive in their acetylated form. This is NAD-dependent protein deacetylase from Rhodopseudomonas palustris (strain ATCC BAA-98 / CGA009).